The primary structure comprises 223 residues: Endonuclease V (223 aa).

Residues Asp35 and Asp103 each coordinate Mg(2+).

This sequence belongs to the endonuclease V family. It depends on Mg(2+) as a cofactor.

It is found in the cytoplasm. The catalysed reaction is Endonucleolytic cleavage at apurinic or apyrimidinic sites to products with a 5'-phosphate.. Its function is as follows. DNA repair enzyme involved in the repair of deaminated bases. Selectively cleaves double-stranded DNA at the second phosphodiester bond 3' to a deoxyinosine leaving behind the intact lesion on the nicked DNA. This Salmonella schwarzengrund (strain CVM19633) protein is Endonuclease V.